Reading from the N-terminus, the 166-residue chain is Interferon gamma (166 aa).

A signal peptide spans 1 to 23 (MNYTSYILAFQLCVILCSSGCNC). At glutamine 24 the chain carries Pyrrolidone carboxylic acid. N-linked (GlcNAc...) asparagine glycans are attached at residues asparagine 39 and asparagine 106.

Belongs to the type II (or gamma) interferon family. As to quaternary structure, homodimer. Interacts with IFNGR1 (via extracellular domain); this interaction promotes IFNGR1 dimerization. In terms of tissue distribution, released primarily from activated T lymphocytes.

Its subcellular location is the secreted. Type II interferon produced by immune cells such as T-cells and NK cells that plays crucial roles in antimicrobial, antiviral, and antitumor responses by activating effector immune cells and enhancing antigen presentation. Primarily signals through the JAK-STAT pathway after interaction with its receptor IFNGR1 to affect gene regulation. Upon IFNG binding, IFNGR1 intracellular domain opens out to allow association of downstream signaling components JAK2, JAK1 and STAT1, leading to STAT1 activation, nuclear translocation and transcription of IFNG-regulated genes. Many of the induced genes are transcription factors such as IRF1 that are able to further drive regulation of a next wave of transcription. Plays a role in class I antigen presentation pathway by inducing a replacement of catalytic proteasome subunits with immunoproteasome subunits. In turn, increases the quantity, quality, and repertoire of peptides for class I MHC loading. Increases the efficiency of peptide generation also by inducing the expression of activator PA28 that associates with the proteasome and alters its proteolytic cleavage preference. Up-regulates as well MHC II complexes on the cell surface by promoting expression of several key molecules such as cathepsins B/CTSB, H/CTSH, and L/CTSL. Participates in the regulation of hematopoietic stem cells during development and under homeostatic conditions by affecting their development, quiescence, and differentiation. The sequence is that of Interferon gamma (IFNG) from Canis lupus familiaris (Dog).